Reading from the N-terminus, the 240-residue chain is Putative N-acetylmannosamine-6-phosphate 2-epimerase (240 aa).

It belongs to the NanE family.

It carries out the reaction an N-acyl-D-glucosamine 6-phosphate = an N-acyl-D-mannosamine 6-phosphate. Its pathway is amino-sugar metabolism; N-acetylneuraminate degradation; D-fructose 6-phosphate from N-acetylneuraminate: step 3/5. Its function is as follows. Converts N-acetylmannosamine-6-phosphate (ManNAc-6-P) to N-acetylglucosamine-6-phosphate (GlcNAc-6-P). The polypeptide is Putative N-acetylmannosamine-6-phosphate 2-epimerase (Vibrio cholerae serotype O1 (strain ATCC 39315 / El Tor Inaba N16961)).